We begin with the raw amino-acid sequence, 220 residues long: Ras-related protein Rab-3A (220 aa).

S31, S32, V33, G34, K35, T36, S37, T48, P49, S53, and T54 together coordinate GTP. T36 is a Mg(2+) binding site. The Switch 1 signature appears at 49–58; that stretch reads PAFVSTVGID. Residues T54 and D77 each contribute to the Mg(2+) site. G80 lines the GTP pocket. The Switch 2 signature appears at 80-96; sequence GQERYRTITTAYYRGAM. T86 carries the phosphothreonine modification. GTP contacts are provided by N135, K136, D138, A166, and K167. 2 positions are modified to phosphoserine: S188 and S190. The tract at residues 194-220 is disordered; that stretch reads ADPAVTGAKQGPQLTDQQAPPHQDCAC. S-geranylgeranyl cysteine attachment occurs at residues C218 and C220. Position 220 is a cysteine methyl ester (C220).

Belongs to the small GTPase superfamily. Rab family. As to quaternary structure, interacts with RIMS1 and RIMS2. Interacts with Rabphilin-3A/RPH3A and Rab effector Noc2/RPH3AL. Interacts with SYTL4. Interacts with RAB3IP. Interacts with SGSM1 and SGSM3. Interacts with SYT1. Interacts with MYH9; this interaction is essential for lysosome exocytosis and plasma membrane repair. Interacts with STXBP1; this interaction promotes RAB3A dissociation from the vesicle membrane. Interacts with SNCA. Interacts with GDI1, GDI2, CHM and CHML; phosphorylation at Thr-86 disrupts these interactions. Interacts with MADD (via uDENN domain); the GTP-bound form is preferred for interaction. The cofactor is Mg(2+). Phosphorylation of Thr-86 in the switch II region by LRRK2 prevents the association of RAB regulatory proteins, including CHM, CHML and RAB GDP dissociation inhibitors GDI1 and GDI2.

The protein resides in the cytoplasm. The protein localises to the cytosol. It is found in the lysosome. Its subcellular location is the cytoplasmic vesicle. It localises to the secretory vesicle. The protein resides in the cell projection. The protein localises to the axon. It is found in the cell membrane. Its subcellular location is the presynapse. It localises to the postsynapse. It catalyses the reaction GTP + H2O = GDP + phosphate + H(+). Its activity is regulated as follows. Regulated by guanine nucleotide exchange factors (GEFs) including RAB3IL1 and MADD which promote the exchange of bound GDP for free GTP. Regulated by GTPase activating proteins (GAPs) including RAB3GAP1 and TBC1D10B which increase the GTP hydrolysis activity. Inhibited by GDP dissociation inhibitors (GDIs) which prevent Rab-GDP dissociation. Functionally, the small GTPases Rab are key regulators of intracellular membrane trafficking, from the formation of transport vesicles to their fusion with membranes. Rabs cycle between an inactive GDP-bound form and an active GTP-bound form that is able to recruit to membranes different sets of downstream effectors directly responsible for vesicle formation, movement, tethering and fusion. RAB3A plays a central role in regulated exocytosis and secretion. Controls the recruitment, tethering and docking of secretory vesicles to the plasma membrane. Upon stimulation, switches to its active GTP-bound form, cycles to vesicles and recruits effectors such as RIMS1, RIMS2, Rabphilin-3A/RPH3A, RPH3AL or SYTL4 to help the docking of vesicules onto the plasma membrane. Upon GTP hydrolysis by GTPase-activating protein, dissociates from the vesicle membrane allowing the exocytosis to proceed. Stimulates insulin secretion through interaction with RIMS2 or RPH3AL effectors in pancreatic beta cells. Regulates calcium-dependent lysosome exocytosis and plasma membrane repair (PMR) via the interaction with 2 effectors, SYTL4 and myosin-9/MYH9. Acts as a positive regulator of acrosome content secretion in sperm cells by interacting with RIMS1. Also plays a role in the regulation of dopamine release by interacting with synaptotagmin I/SYT. The polypeptide is Ras-related protein Rab-3A (RAB3A) (Sus scrofa (Pig)).